The sequence spans 239 residues: MGHKVNPVGMRLQINRTWDSRWYADTKDYGDLLLEDIKIREFIKEECKQAGVARVIIERPHKKCRVTIHTARPGVIIGKKGADIEVLRKKIASMTDSELHLNIVEVRKPELDAQLVGESIAQQLERRVSFRRAMKRAVQNAMRMGALGIRVNVAGRLGGAEIARTEWYREGRVPLHTLRADIDYAHSEASTPYGIIGIKVWIFKGEIMEHDPQARDRKAQELQDGPAPRGAGGNRRGDR.

The KH type-2 domain occupies 39–107; that stretch reads IREFIKEECK…ELHLNIVEVR (69 aa). The span at 212–221 shows a compositional bias: basic and acidic residues; the sequence is PQARDRKAQE. The disordered stretch occupies residues 212–239; the sequence is PQARDRKAQELQDGPAPRGAGGNRRGDR. Residues 230–239 are compositionally biased toward gly residues; that stretch reads GAGGNRRGDR.

Belongs to the universal ribosomal protein uS3 family. As to quaternary structure, part of the 30S ribosomal subunit. Forms a tight complex with proteins S10 and S14.

Functionally, binds the lower part of the 30S subunit head. Binds mRNA in the 70S ribosome, positioning it for translation. This chain is Small ribosomal subunit protein uS3, found in Ruegeria sp. (strain TM1040) (Silicibacter sp.).